The following is a 175-amino-acid chain: Peptide deformylase (175 aa).

Cys-99 and His-141 together coordinate Fe cation. The active site involves Glu-142. His-145 contacts Fe cation.

This sequence belongs to the polypeptide deformylase family. Fe(2+) serves as cofactor.

It carries out the reaction N-terminal N-formyl-L-methionyl-[peptide] + H2O = N-terminal L-methionyl-[peptide] + formate. In terms of biological role, removes the formyl group from the N-terminal Met of newly synthesized proteins. Requires at least a dipeptide for an efficient rate of reaction. N-terminal L-methionine is a prerequisite for activity but the enzyme has broad specificity at other positions. The chain is Peptide deformylase from Rickettsia prowazekii (strain Madrid E).